Reading from the N-terminus, the 516-residue chain is Pickpocket protein 11 (516 aa).

2 consecutive transmembrane segments (helical) span residues 117–137 and 454–474; these read ILWW…VIMS and FIGT…VSVF.

The protein belongs to the amiloride-sensitive sodium channel (TC 1.A.6) family. As to expression, expressed in embryonic and larval tracheal systems in the dorsal trunk and transverse connective (TC), but not in the junction between the dorsal trunk and TC, and in several tracheal branches and terminal cells. In larvae, also expressed in ventral pits. Expressed in the taste-sensing terminal organ of the larval head. In adult, expressed in hairs on the tibia, femur, tarsi of the leg and wing margin.

It localises to the membrane. In terms of biological role, part of a complex that plays a role in tracheal liquid clearance. In both larvae and adults, contributes to the behavioral response to salt. Probable role in sodium transport. The polypeptide is Pickpocket protein 11 (ppk11) (Drosophila melanogaster (Fruit fly)).